The following is a 420-amino-acid chain: Nucleobindin-2 (420 aa).

The signal sequence occupies residues 1 to 24; the sequence is MRWRIIQVQYCFLLVPCMLTALEA. The DNA-binding element occupies 171–223; sequence RTRHEEFKKYEMMKEHERREYLKTLSEEKRKEEESKFEEMKRKHEDHPKVNHP. The segment at 193–225 is disordered; the sequence is KTLSEEKRKEEESKFEEMKRKHEDHPKVNHPGS. The interval 213–420 is binds to necdin; it reads KHEDHPKVNH…AGELKFEPHT (208 aa). EF-hand domains follow at residues 241–276 and 293–328; these read PNDF…ELEK and ERLR…KEFL. Residues aspartate 254, asparagine 256, aspartate 258, glutamate 265, aspartate 306, asparagine 308, aspartate 310, and glutamate 317 each contribute to the Ca(2+) site. The GBA motif lies at 304 to 334; it reads EIDNNKDRLVTLEEFLRATEKKEFLEPDSWE. Serine 332 carries the phosphoserine modification. A compositionally biased stretch (basic and acidic residues) spans 365 to 389; the sequence is AEELQKQKEDLQRQHDHLEAQKQEY. The interval 365-420 is disordered; sequence AEELQKQKEDLQRQHDHLEAQKQEYHQAVQHLEQKKLQQGIAPSGPAGELKFEPHT.

Belongs to the nucleobindin family. In terms of assembly, interacts (via GBA motif) with guanine nucleotide-binding protein G(i) alpha subunit GNAI3. Preferentially interacts with inactive rather than active GNAI3. Interaction with GNAI3 is inhibited when NUCB2 binds calcium, probably due to a conformational change which renders the GBA motif inaccessible. Binds to the postmitotic growth suppressor NDN; coexpression abolishes NUCB2 secretion. Interacts with MC4R. Found in liver, heart, thymus, muscle, intestine, kidney, lung, spleen and throughout the brain, in cerebral cortex, hippocampus, hypothalamus and medulla oblongata. Nucb2 and necdin levels were higher in postmitotic neurons.

Its subcellular location is the cytoplasm. The protein localises to the perikaryon. It localises to the endoplasmic reticulum. The protein resides in the golgi apparatus. It is found in the nucleus envelope. Its subcellular location is the membrane. The protein localises to the secreted. Calcium-binding protein which may have a role in calcium homeostasis. Acts as a non-receptor guanine nucleotide exchange factor which binds to and activates guanine nucleotide-binding protein (G-protein) alpha subunit GNAI3. In terms of biological role, anorexigenic peptide, seems to play an important role in hypothalamic pathways regulating food intake and energy homeostasis, acting in a leptin-independent manner. May also exert hypertensive roles and modulate blood pressure through directly acting on peripheral arterial resistance. In intestinal epithelial cells, plays a role in the inhibition of hepatic glucose production via MC4R receptor leading to increased cyclic adenosine monophosphate (cAMP) levels and glucagon-like peptide 1 (GLP-1) secretion. This chain is Nucleobindin-2 (Nucb2), found in Mus musculus (Mouse).